The primary structure comprises 555 residues: Bicyclo-germacrene synthase (555 aa).

2 residues coordinate Mg(2+): aspartate 311 and glutamate 315. Positions 311–315 match the DDXXD motif motif; sequence DDTYE. 2 homodimerization regions span residues 316–322 and 392–429; these read YATLDEL and EAKW…VGVG. Residues aspartate 459 and glutamate 467 each contribute to the Mg(2+) site.

It belongs to the terpene synthase family. As to quaternary structure, homodimer. Mn(2+) serves as cofactor. Requires Mg(2+) as cofactor. In terms of tissue distribution, expressed in peltate glandular trichomes. Present at low levels in flowers, leaves and stems.

The catalysed reaction is (2E,6E)-farnesyl diphosphate = bicyclogermacrene + diphosphate. It catalyses the reaction (2E)-geranyl diphosphate = terpinolene + diphosphate. The enzyme catalyses (2E)-geranyl diphosphate = (4R)-limonene + diphosphate. It carries out the reaction (2E)-geranyl diphosphate + H2O = (2E)-geraniol + diphosphate. The catalysed reaction is (2E,6E)-farnesyl diphosphate = allo-aromadendrene + diphosphate. It functions in the pathway secondary metabolite biosynthesis; terpenoid biosynthesis. Involved in the biosynthesis of phenolic sesquiterpenes natural products. Sesquiterpene synthase converting (2E,6E)-farnesyl diphosphate (FPP) to alloaromadendrene and bicyclo-germacrene. The product formation is dependent on the metal ions present and in presence of manganese, bicyclo-germacrene is greatly favored while both alloaromadendrene and bicyclo-germacrene are produced in equivalent amounts in the presence of magnesium. Can also convert geranyl diphosphate (GPP) to terpinolene, limonene and geraniol, and this conversion is not affected by the presence of magnesium or manganese. This is Bicyclo-germacrene synthase (TPS4) from Origanum vulgare (Wild marjoram).